The sequence spans 416 residues: MTDMRRLGQRAKQASLLIAPLSTQIKNRFLSTLAKALVDDTQTLLAANQKDLANAKEHGISDIMMDRLRLTSERIKAIAQGVQQVADLADPIGQVIKGYTNLDGLKILQKRVPLGVIAMIFESRPNVSVDAFSLAFKTNNAIILRGGKDALHSNKALVKLIRQSLEKSGITPDAVQLVEDPSHAVAEELMQATDYVDVLIPRGGAKLIQTVKEKAKVPVIETGVGNVHIYVDAQADLDMATNIVINAKTKRPSVCNAAEGLVIHEAVAARFIPMLEKAINQVQPVEWRADDKALPLFEQAVPAKAEDFETEFLDYIMSVKVVSSLEEAISWINQHTSHHSEAIITRDIKAAETFQDLVDAAAVYVNASTRFTDGFVFGLGAEIGISTQKMHARGPMGLEALTSTKFYINGDGHIRE.

It belongs to the gamma-glutamyl phosphate reductase family.

It is found in the cytoplasm. The catalysed reaction is L-glutamate 5-semialdehyde + phosphate + NADP(+) = L-glutamyl 5-phosphate + NADPH + H(+). It functions in the pathway amino-acid biosynthesis; L-proline biosynthesis; L-glutamate 5-semialdehyde from L-glutamate: step 2/2. Catalyzes the NADPH-dependent reduction of L-glutamate 5-phosphate into L-glutamate 5-semialdehyde and phosphate. The product spontaneously undergoes cyclization to form 1-pyrroline-5-carboxylate. In Streptococcus pyogenes serotype M6 (strain ATCC BAA-946 / MGAS10394), this protein is Gamma-glutamyl phosphate reductase.